Here is a 422-residue protein sequence, read N- to C-terminus: UDP-N-acetylglucosamine 1-carboxyvinyltransferase (422 aa).

22-23 contributes to the phosphoenolpyruvate binding site; it reads KN. R92 is a binding site for UDP-N-acetyl-alpha-D-glucosamine. C116 acts as the Proton donor in catalysis. C116 is subject to 2-(S-cysteinyl)pyruvic acid O-phosphothioketal. Residues 121-125, D305, and I327 each bind UDP-N-acetyl-alpha-D-glucosamine; that span reads RPVDQ.

The protein belongs to the EPSP synthase family. MurA subfamily.

Its subcellular location is the cytoplasm. The enzyme catalyses phosphoenolpyruvate + UDP-N-acetyl-alpha-D-glucosamine = UDP-N-acetyl-3-O-(1-carboxyvinyl)-alpha-D-glucosamine + phosphate. Its pathway is cell wall biogenesis; peptidoglycan biosynthesis. Cell wall formation. Adds enolpyruvyl to UDP-N-acetylglucosamine. The chain is UDP-N-acetylglucosamine 1-carboxyvinyltransferase from Sorangium cellulosum (strain So ce56) (Polyangium cellulosum (strain So ce56)).